Here is a 671-residue protein sequence, read N- to C-terminus: DNA ligase (671 aa).

NAD(+)-binding positions include 32 to 36 (DAEYD), 81 to 82 (SL), and Glu-113. The active-site N6-AMP-lysine intermediate is Lys-115. Positions 136, 173, 290, and 314 each coordinate NAD(+). Zn(2+) contacts are provided by Cys-408, Cys-411, Cys-426, and Cys-432. Positions 593-671 (EIDSPFAGKT…ETEMLRLLGS (79 aa)) constitute a BRCT domain.

This sequence belongs to the NAD-dependent DNA ligase family. LigA subfamily. It depends on Mg(2+) as a cofactor. The cofactor is Mn(2+).

It catalyses the reaction NAD(+) + (deoxyribonucleotide)n-3'-hydroxyl + 5'-phospho-(deoxyribonucleotide)m = (deoxyribonucleotide)n+m + AMP + beta-nicotinamide D-nucleotide.. DNA ligase that catalyzes the formation of phosphodiester linkages between 5'-phosphoryl and 3'-hydroxyl groups in double-stranded DNA using NAD as a coenzyme and as the energy source for the reaction. It is essential for DNA replication and repair of damaged DNA. This is DNA ligase from Escherichia coli O1:K1 / APEC.